Here is a 442-residue protein sequence, read N- to C-terminus: tRNA-2-methylthio-N(6)-dimethylallyladenosine synthase (442 aa).

Residues 2-120 (KKVFIRTFGC…LPKMIVDKET (119 aa)) form the MTTase N-terminal domain. [4Fe-4S] cluster-binding residues include Cys-11, Cys-49, Cys-83, Cys-157, Cys-161, and Cys-164. The Radical SAM core domain maps to 143–375 (RVEGGAAFVS…NEVIEAETAR (233 aa)). A TRAM domain is found at 378 to 441 (QTMVGTVQRC…TFSLRGKVVE (64 aa)).

Belongs to the methylthiotransferase family. MiaB subfamily. In terms of assembly, monomer. It depends on [4Fe-4S] cluster as a cofactor.

Its subcellular location is the cytoplasm. The catalysed reaction is N(6)-dimethylallyladenosine(37) in tRNA + (sulfur carrier)-SH + AH2 + 2 S-adenosyl-L-methionine = 2-methylsulfanyl-N(6)-dimethylallyladenosine(37) in tRNA + (sulfur carrier)-H + 5'-deoxyadenosine + L-methionine + A + S-adenosyl-L-homocysteine + 2 H(+). Catalyzes the methylthiolation of N6-(dimethylallyl)adenosine (i(6)A), leading to the formation of 2-methylthio-N6-(dimethylallyl)adenosine (ms(2)i(6)A) at position 37 in tRNAs that read codons beginning with uridine. The polypeptide is tRNA-2-methylthio-N(6)-dimethylallyladenosine synthase (Neisseria meningitidis serogroup B (strain ATCC BAA-335 / MC58)).